The following is a 669-amino-acid chain: Elongation factor G 2 (669 aa).

The region spanning 1–276 (MSIRNIGIMA…SIVDYLPSPF (276 aa)) is the tr-type G domain. GTP is bound by residues 10-17 (AHIDAGKT), 74-78 (DTPGH), and 128-131 (NKMD).

It belongs to the TRAFAC class translation factor GTPase superfamily. Classic translation factor GTPase family. EF-G/EF-2 subfamily.

It localises to the cytoplasm. Its function is as follows. Catalyzes the GTP-dependent ribosomal translocation step during translation elongation. During this step, the ribosome changes from the pre-translocational (PRE) to the post-translocational (POST) state as the newly formed A-site-bound peptidyl-tRNA and P-site-bound deacylated tRNA move to the P and E sites, respectively. Catalyzes the coordinated movement of the two tRNA molecules, the mRNA and conformational changes in the ribosome. This Borreliella burgdorferi (strain ATCC 35210 / DSM 4680 / CIP 102532 / B31) (Borrelia burgdorferi) protein is Elongation factor G 2 (fusB).